The primary structure comprises 141 residues: Large ribosomal subunit protein uL16 (141 aa).

Residues 1–21 (MLMPKRVKYRKQQRGHNRGMA) are disordered.

Belongs to the universal ribosomal protein uL16 family. In terms of assembly, part of the 50S ribosomal subunit.

Its function is as follows. Binds 23S rRNA and is also seen to make contacts with the A and possibly P site tRNAs. This Roseiflexus sp. (strain RS-1) protein is Large ribosomal subunit protein uL16.